Here is a 223-residue protein sequence, read N- to C-terminus: Noggin-3 (223 aa).

An N-terminal signal peptide occupies residues 1–23; it reads MDNIPYFLATVLIFSLGFRIEEG. N-linked (GlcNAc...) asparagine glycans are attached at residues N60 and N93.

Belongs to the noggin family. As to quaternary structure, homodimer; disulfide-linked.

It localises to the secreted. In terms of biological role, may function as an inhibitor of bone morphogenetic proteins (BMP) signaling during later stages of development including late phases of dorsoventral patterning, to refine the early pattern set up by the interaction of chordino and BMP2/4. Not involved in organizer function or early phases of dorsoventral pattern formation. The sequence is that of Noggin-3 (nog3) from Danio rerio (Zebrafish).